We begin with the raw amino-acid sequence, 785 residues long: MQQKVLSSLEFHKVKEQITAHAASSLGREKLLQLKPLTDLSDIQKQLDEVEEASAVMRLRGHAPFGGLTDIRSALRRAEIGSVLTPAEFTELSGLLYAVKQMKHFISQMTEDGVGIPLIQAHAEELITLGDLEREINSCIDDHGEVLDHASPALRGIRTQLRTLESRVRDRLESMLRSSSASKMLSDTIVTIRNDRFVIPVKQEYRSSYGGIVHDTSSSGATLFIEPQAIVDMNNSLQQAKVKEKQEIERILRMLTEHTAEHTQEIAQDVEVLQTLDFIFAKARYAKAMKATKPLMNGDGFIRLKKARHPLLPQDQVVANDIELGGDYSTIVITGPNTGGKTVTLKTLGLLTIMAQAGLHIPADEGSEAAVFDNVFADIGDEQSIEQSLSTFSSHMVNIVNILKDVSENSLVLFDELGAGTDPQEGAALAMSILDEVHRTNARVLATTHYPELKAYGYNRQGVMNASVEFDIETLSPTYKLLIGVPGRSNAFEISRRLGLPEHIIGQAKSEMTAEHNEVDLMIASLEKSKKRADEELSETESIRKEAEKLHKDLQQQIIELNAQKDKMMEEAEQKAAEKLEAAANEAEQIIRELRSIKQEHRSFKEHELIDAKKRLGDAMPAFEKSKQPERKTEKKRELKPGDEVKVLTFGQKGALLEKTGEKEWNVQIGILKMKVKEKDLEFLKSAPEPKKEKAITAVKGKDYHVSLELDLRGERYENALSRVEKYLDDAVLAGHPRVSIIHGKGTGALRKGVQDLLKNHRSVKSSRFGEAGEGGSGVTIVELK.

335-342 (GPNTGGKT) serves as a coordination point for ATP. The 76-residue stretch at 710–785 (LDLRGERYEN…GSGVTIVELK (76 aa)) folds into the Smr domain.

The protein belongs to the DNA mismatch repair MutS family. MutS2 subfamily. As to quaternary structure, homodimer. Binds to stalled ribosomes, contacting rRNA.

In terms of biological role, endonuclease that is involved in the suppression of homologous recombination and thus may have a key role in the control of bacterial genetic diversity. Acts as a ribosome collision sensor, splitting the ribosome into its 2 subunits. Detects stalled/collided 70S ribosomes which it binds and splits by an ATP-hydrolysis driven conformational change. Acts upstream of the ribosome quality control system (RQC), a ribosome-associated complex that mediates the extraction of incompletely synthesized nascent chains from stalled ribosomes and their subsequent degradation. Probably generates substrates for RQC. The chain is Endonuclease MutS2 from Bacillus velezensis (strain DSM 23117 / BGSC 10A6 / LMG 26770 / FZB42) (Bacillus amyloliquefaciens subsp. plantarum).